The following is a 102-amino-acid chain: Protamine-2 (102 aa).

Positions Met-1 to His-102 are disordered. 3 positions are modified to phosphoserine: Ser-8, Ser-10, and Ser-37. Residues Ser-8 to Tyr-17 are compositionally biased toward basic and acidic residues. Positions Glu-39 to His-48 are enriched in basic and acidic residues. Residues Gly-49 to His-102 show a composition bias toward basic residues.

The protein belongs to the protamine P2 family. In terms of assembly, interacts with TDRP. In terms of processing, proteolytic processing into mature chains is required for histone eviction during spermatogenesis. Transition proteins (TNP1 and TNP2) are required for processing. In terms of tissue distribution, testis.

The protein localises to the nucleus. Its subcellular location is the chromosome. Protamines substitute for histones in the chromatin of sperm during the haploid phase of spermatogenesis. They compact sperm DNA into a highly condensed, stable and inactive complex. The sequence is that of Protamine-2 (PRM2) from Gorilla gorilla gorilla (Western lowland gorilla).